We begin with the raw amino-acid sequence, 179 residues long: Large ribosomal subunit protein uL5 (179 aa).

The protein belongs to the universal ribosomal protein uL5 family. As to quaternary structure, part of the 50S ribosomal subunit; part of the 5S rRNA/L5/L18/L25 subcomplex. Contacts the 5S rRNA and the P site tRNA. Forms a bridge to the 30S subunit in the 70S ribosome.

Functionally, this is one of the proteins that bind and probably mediate the attachment of the 5S RNA into the large ribosomal subunit, where it forms part of the central protuberance. In the 70S ribosome it contacts protein S13 of the 30S subunit (bridge B1b), connecting the 2 subunits; this bridge is implicated in subunit movement. Contacts the P site tRNA; the 5S rRNA and some of its associated proteins might help stabilize positioning of ribosome-bound tRNAs. The protein is Large ribosomal subunit protein uL5 of Staphylococcus saprophyticus subsp. saprophyticus (strain ATCC 15305 / DSM 20229 / NCIMB 8711 / NCTC 7292 / S-41).